The sequence spans 311 residues: Dehydrogenase/reductase SDR family member 7C (311 aa).

Residues 1 to 18 form the signal peptide; that stretch reads MGIMAVLMLPLLLLGVSG. Residues Ser-47, Leu-49, Tyr-191, Lys-195, and Ser-226 each contribute to the NAD(+) site. The Proton acceptor role is filled by Tyr-191.

It belongs to the short-chain dehydrogenases/reductases (SDR) family. In terms of tissue distribution, expressed in skeletal muscle, cardiac muscle and skin.

Its subcellular location is the sarcoplasmic reticulum membrane. The catalysed reaction is all-trans-retinol + NAD(+) = all-trans-retinal + NADH + H(+). NADH-dependent oxidoreductase which catalyzes the oxidation of all-trans-retinol to all-trans-retinal. Plays a role in the regulation of cardiac and skeletal muscle metabolic functions. Maintains Ca(2+) intracellular homeostasis by repressing Ca(2+) release from the sarcoplasmic reticulum (SR) in myotubes, possibly through local alternations in NAD/NADH or retinol/retinal. Also plays a role in Ca(2+) homeostasis by controlling Ca(2+) overload in the cytosol and the SR in myotubes. Involved in glucose uptake into skeletal muscles and muscle performance by activating PI3K and mTORC2-mediated AKT1 phosphorylation signaling pathways, possibly through the action of its downstream catalytic product all-trans-retinoic acid. This is Dehydrogenase/reductase SDR family member 7C from Rattus norvegicus (Rat).